A 178-amino-acid polypeptide reads, in one-letter code: Transcription factor E (178 aa).

The HTH TFE/IIEalpha-type domain maps to 3 to 86; sequence AHEALAEIAG…YWRITDEPIQ (84 aa).

It belongs to the TFE family. Monomer. Interaction with RNA polymerase subunits RpoF and RpoE is necessary for Tfe stimulatory transcription activity. Able to interact with Tbp and RNA polymerase in the absence of DNA promoter. Interacts both with the preinitiation and elongation complexes.

Transcription factor that plays a role in the activation of archaeal genes transcribed by RNA polymerase. Facilitates transcription initiation by enhancing TATA-box recognition by TATA-box-binding protein (Tbp), and transcription factor B (Tfb) and RNA polymerase recruitment. Not absolutely required for transcription in vitro, but particularly important in cases where Tbp or Tfb function is not optimal. It dynamically alters the nucleic acid-binding properties of RNA polymerases by stabilizing the initiation complex and destabilizing elongation complexes. Seems to translocate with the RNA polymerase following initiation and acts by binding to the non template strand of the transcription bubble in elongation complexes. In Thermofilum pendens (strain DSM 2475 / Hrk 5), this protein is Transcription factor E.